Reading from the N-terminus, the 523-residue chain is FAD:protein FMN transferase (523 aa).

Transmembrane regions (helical) follow at residues 88 to 108 (LLAG…VALA), 118 to 138 (GGAA…LVLL), and 169 to 189 (GLAL…TAPA). FAD-binding positions include 277-279 (LFD) and D336. Position 339 (A339) interacts with Mg(2+). FAD-binding positions include K342 and 423–425 (HII). Mg(2+)-binding residues include D450 and T454.

The protein in the N-terminal section; belongs to the RseC family. It in the C-terminal section; belongs to the ApbE family. Requires Mg(2+) as cofactor.

It is found in the cell membrane. The enzyme catalyses L-threonyl-[protein] + FAD = FMN-L-threonyl-[protein] + AMP + H(+). Flavin transferase that catalyzes the transfer of the FMN moiety of FAD and its covalent binding to the hydroxyl group of a threonine residue in a target flavoprotein. Is likely involved in the modification of RnfG and RnfD. Required for nitrogen fixation. This chain is FAD:protein FMN transferase, found in Rhodobacter capsulatus (Rhodopseudomonas capsulata).